We begin with the raw amino-acid sequence, 199 residues long: Ribonuclease P protein component 3 (199 aa).

The protein belongs to the eukaryotic/archaeal RNase P protein component 3 family. Consists of a catalytic RNA component and at least 4-5 protein subunits.

The protein localises to the cytoplasm. It catalyses the reaction Endonucleolytic cleavage of RNA, removing 5'-extranucleotides from tRNA precursor.. Functionally, part of ribonuclease P, a protein complex that generates mature tRNA molecules by cleaving their 5'-ends. In Archaeoglobus fulgidus (strain ATCC 49558 / DSM 4304 / JCM 9628 / NBRC 100126 / VC-16), this protein is Ribonuclease P protein component 3.